Here is a 1400-residue protein sequence, read N- to C-terminus: DNA-directed RNA polymerase subunit beta' (1400 aa).

The Zn(2+) site is built by Cys-71, Cys-73, Cys-86, and Cys-89. 3 residues coordinate Mg(2+): Asp-462, Asp-464, and Asp-466. The Zn(2+) site is built by Cys-811, Cys-885, Cys-892, and Cys-895.

Belongs to the RNA polymerase beta' chain family. As to quaternary structure, the RNAP catalytic core consists of 2 alpha, 1 beta, 1 beta' and 1 omega subunit. When a sigma factor is associated with the core the holoenzyme is formed, which can initiate transcription. It depends on Mg(2+) as a cofactor. Zn(2+) serves as cofactor.

It catalyses the reaction RNA(n) + a ribonucleoside 5'-triphosphate = RNA(n+1) + diphosphate. In terms of biological role, DNA-dependent RNA polymerase catalyzes the transcription of DNA into RNA using the four ribonucleoside triphosphates as substrates. This Brucella anthropi (strain ATCC 49188 / DSM 6882 / CCUG 24695 / JCM 21032 / LMG 3331 / NBRC 15819 / NCTC 12168 / Alc 37) (Ochrobactrum anthropi) protein is DNA-directed RNA polymerase subunit beta'.